Consider the following 196-residue polypeptide: Pyridoxal 5'-phosphate synthase subunit PdxT (196 aa).

52–54 (GES) is a binding site for L-glutamine. The active-site Nucleophile is C84. Residues R113 and 141–142 (IR) contribute to the L-glutamine site. Catalysis depends on charge relay system residues H178 and E180.

It belongs to the glutaminase PdxT/SNO family. In the presence of PdxS, forms a dodecamer of heterodimers. Only shows activity in the heterodimer.

The catalysed reaction is aldehydo-D-ribose 5-phosphate + D-glyceraldehyde 3-phosphate + L-glutamine = pyridoxal 5'-phosphate + L-glutamate + phosphate + 3 H2O + H(+). It carries out the reaction L-glutamine + H2O = L-glutamate + NH4(+). It participates in cofactor biosynthesis; pyridoxal 5'-phosphate biosynthesis. Functionally, catalyzes the hydrolysis of glutamine to glutamate and ammonia as part of the biosynthesis of pyridoxal 5'-phosphate. The resulting ammonia molecule is channeled to the active site of PdxS. The chain is Pyridoxal 5'-phosphate synthase subunit PdxT from Pyrococcus abyssi (strain GE5 / Orsay).